A 457-amino-acid chain; its full sequence is tRNA-2-methylthio-N(6)-dimethylallyladenosine synthase (457 aa).

The MTTase N-terminal domain maps to 19-134 (RKLFIETYGC…LPNLVGAVEH (116 aa)). Positions 28, 64, 98, 172, 176, and 179 each coordinate [4Fe-4S] cluster. The 233-residue stretch at 158 to 390 (PGVHISGFVS…IDLQNKLSEE (233 aa)) folds into the Radical SAM core domain. A TRAM domain is found at 393–456 (LRDIGKTFEV…SATLFGEPVE (64 aa)).

The protein belongs to the methylthiotransferase family. MiaB subfamily. Monomer. The cofactor is [4Fe-4S] cluster.

Its subcellular location is the cytoplasm. It catalyses the reaction N(6)-dimethylallyladenosine(37) in tRNA + (sulfur carrier)-SH + AH2 + 2 S-adenosyl-L-methionine = 2-methylsulfanyl-N(6)-dimethylallyladenosine(37) in tRNA + (sulfur carrier)-H + 5'-deoxyadenosine + L-methionine + A + S-adenosyl-L-homocysteine + 2 H(+). Catalyzes the methylthiolation of N6-(dimethylallyl)adenosine (i(6)A), leading to the formation of 2-methylthio-N6-(dimethylallyl)adenosine (ms(2)i(6)A) at position 37 in tRNAs that read codons beginning with uridine. In Parabacteroides distasonis (strain ATCC 8503 / DSM 20701 / CIP 104284 / JCM 5825 / NCTC 11152), this protein is tRNA-2-methylthio-N(6)-dimethylallyladenosine synthase.